A 502-amino-acid polypeptide reads, in one-letter code: Glycerol kinase (502 aa).

An ADP-binding site is contributed by T14. 3 residues coordinate ATP: T14, T15, and S16. T14 lines the sn-glycerol 3-phosphate pocket. R18 lines the ADP pocket. Positions 84, 85, 136, and 246 each coordinate sn-glycerol 3-phosphate. The glycerol site is built by R84, E85, Y136, D246, and Q247. ADP is bound by residues T268 and G311. T268, G311, Q315, and G412 together coordinate ATP. ADP is bound by residues G412 and N416.

It belongs to the FGGY kinase family. In terms of assembly, homotetramer and homodimer (in equilibrium). Heterodimer with EIIA-Glc. Binds 1 zinc ion per glycerol kinase EIIA-Glc dimer. The zinc ion is important for dimerization.

It carries out the reaction glycerol + ATP = sn-glycerol 3-phosphate + ADP + H(+). It functions in the pathway polyol metabolism; glycerol degradation via glycerol kinase pathway; sn-glycerol 3-phosphate from glycerol: step 1/1. Activity of this regulatory enzyme is affected by several metabolites. Allosterically and non-competitively inhibited by fructose 1,6-bisphosphate (FBP) and unphosphorylated phosphocarrier protein EIIA-Glc (III-Glc), an integral component of the bacterial phosphotransferase (PTS) system. In terms of biological role, key enzyme in the regulation of glycerol uptake and metabolism. Catalyzes the phosphorylation of glycerol to yield sn-glycerol 3-phosphate. The polypeptide is Glycerol kinase (Salmonella typhimurium (strain LT2 / SGSC1412 / ATCC 700720)).